We begin with the raw amino-acid sequence, 317 residues long: Serpentine receptor class delta-47 (317 aa).

The next 7 membrane-spanning stretches (helical) occupy residues 8 to 28 (IFYPIFLALVFPTQIFLFVVV), 42 to 62 (VLFCNCIFQTISVVLLCLLQL), 89 to 109 (CLYFVSQSTSVVSNILVLLTI), 128 to 148 (IVIILLLVPVFVLVGAEIYSV), 185 to 205 (YLIISIVFGSVFLLPPMGLYT), 239 to 259 (ACLPLVSLCPIFVCYVIVIGT), and 270 to 290 (ISVLVLLPTFFDPYITLYSVA).

Belongs to the nematode receptor-like protein srd family.

The protein resides in the membrane. The polypeptide is Serpentine receptor class delta-47 (srd-47) (Caenorhabditis elegans).